Here is a 427-residue protein sequence, read N- to C-terminus: Tol-Pal system protein TolB (427 aa).

The first 23 residues, 1-23 (MKLIARLMSMCAVLFFAINSAYA), serve as a signal peptide directing secretion.

Belongs to the TolB family. In terms of assembly, the Tol-Pal system is composed of five core proteins: the inner membrane proteins TolA, TolQ and TolR, the periplasmic protein TolB and the outer membrane protein Pal. They form a network linking the inner and outer membranes and the peptidoglycan layer.

It is found in the periplasm. Its function is as follows. Part of the Tol-Pal system, which plays a role in outer membrane invagination during cell division and is important for maintaining outer membrane integrity. The protein is Tol-Pal system protein TolB of Actinobacillus succinogenes (strain ATCC 55618 / DSM 22257 / CCUG 43843 / 130Z).